We begin with the raw amino-acid sequence, 369 residues long: Flagellar P-ring protein (369 aa).

The first 22 residues, 1-22 (MIKLKQLIAATLLLSTAFGVHA), serve as a signal peptide directing secretion.

This sequence belongs to the FlgI family. As to quaternary structure, the basal body constitutes a major portion of the flagellar organelle and consists of four rings (L,P,S, and M) mounted on a central rod.

The protein localises to the periplasm. It localises to the bacterial flagellum basal body. In terms of biological role, assembles around the rod to form the L-ring and probably protects the motor/basal body from shearing forces during rotation. The sequence is that of Flagellar P-ring protein from Pseudomonas syringae pv. syringae (strain B728a).